The following is a 688-amino-acid chain: PTS system glucoside-specific EIICBA component (688 aa).

The 425-residue stretch at K3–D427 folds into the PTS EIIC type-1 domain. The next 10 helical transmembrane spans lie at I12–F32, L81–M101, L137–L157, F182–W202, L223–I243, A284–I304, I315–P335, F340–L360, L364–G384, and L395–I415. The PTS EIIB type-1 domain occupies A438–K519. C460 (phosphocysteine intermediate; for EIIB activity) is an active-site residue. The 105-residue stretch at D560–N664 folds into the PTS EIIA type-1 domain. H612 functions as the Tele-phosphohistidine intermediate; for EIIA activity in the catalytic mechanism.

Its subcellular location is the cell membrane. In terms of biological role, the phosphoenolpyruvate-dependent sugar phosphotransferase system (sugar PTS), a major carbohydrate active -transport system, catalyzes the phosphorylation of incoming sugar substrates concomitantly with their translocation across the cell membrane. This system is involved in alpha- and beta-glucoside transport. This chain is PTS system glucoside-specific EIICBA component (glcB), found in Staphylococcus aureus (strain MRSA252).